Here is a 320-residue protein sequence, read N- to C-terminus: Acetyl-coenzyme A carboxylase carboxyl transferase subunit alpha (320 aa).

One can recognise a CoA carboxyltransferase C-terminal domain in the interval 41 to 295 (RIEEKAGQAL…GEAIAQAFDE (255 aa)).

The protein belongs to the AccA family. Acetyl-CoA carboxylase is a heterohexamer composed of biotin carboxyl carrier protein (AccB), biotin carboxylase (AccC) and two subunits each of ACCase subunit alpha (AccA) and ACCase subunit beta (AccD).

The protein resides in the cytoplasm. It carries out the reaction N(6)-carboxybiotinyl-L-lysyl-[protein] + acetyl-CoA = N(6)-biotinyl-L-lysyl-[protein] + malonyl-CoA. It participates in lipid metabolism; malonyl-CoA biosynthesis; malonyl-CoA from acetyl-CoA: step 1/1. Its function is as follows. Component of the acetyl coenzyme A carboxylase (ACC) complex. First, biotin carboxylase catalyzes the carboxylation of biotin on its carrier protein (BCCP) and then the CO(2) group is transferred by the carboxyltransferase to acetyl-CoA to form malonyl-CoA. The polypeptide is Acetyl-coenzyme A carboxylase carboxyl transferase subunit alpha (Bradyrhizobium sp. (strain BTAi1 / ATCC BAA-1182)).